Here is a 61-residue protein sequence, read N- to C-terminus: Beta-insect depressant toxin BmKIT2 (61 aa).

Positions 1 to 61 (DGYIKGKSGC…TWKSESNTCG (61 aa)) constitute an LCN-type CS-alpha/beta domain. Intrachain disulfides connect Cys-10–Cys-60, Cys-14–Cys-35, Cys-21–Cys-42, and Cys-25–Cys-44. Position 61 is a glycine amide (Gly-61).

Belongs to the long (4 C-C) scorpion toxin superfamily. Sodium channel inhibitor family. Beta subfamily. In terms of tissue distribution, expressed by the venom gland.

It is found in the secreted. On insects, this depressant beta-toxins cause a transient contraction paralysis followed by a slow flaccid paralysis. They bind voltage-independently at site-4 of sodium channels (Nav) and shift the voltage of activation toward more negative potentials thereby affecting sodium channel activation and promoting spontaneous and repetitive firing. This toxin is active against insects and mammals. It is capable of binding to not only cockroach neuronal membranes, but also rat cerebrocortical and hippocampal synaptosomes. This toxin also has potent peripheral and central suppressive effects on rat nociceptive spontaneous responses, thermal hyperalgesia and spinal c-Fos expression induced by formalin and carrageenan, which may be derived from its modulation on the activity of sodium channels of the neurons. Administration of BmKIT2 into rat brain can also suppress the epileptic seizures significantly. The chain is Beta-insect depressant toxin BmKIT2 from Olivierus martensii (Manchurian scorpion).